The chain runs to 71 residues: Long neurotoxin Tx-NM3-1 (71 aa).

5 disulfides stabilise this stretch: cysteine 3-cysteine 20, cysteine 14-cysteine 41, cysteine 26-cysteine 30, cysteine 45-cysteine 56, and cysteine 57-cysteine 62.

As to expression, expressed by the venom gland.

The protein localises to the secreted. Functionally, binds with high affinity to muscular (alpha-1-beta-1-gamma-delta/CHRNA1-CHRNB1-CHRNG-CHRND) and neuronal (alpha-7/CHRNA7) nicotinic acetylcholine receptor (nAChR) and inhibits acetylcholine from binding to the receptor, thereby impairing neuromuscular and neuronal transmission. Ranges of nAChR inhibition are in nanomolar (competitive binding with alpha-bungarotoxin gives Ki=1.66 nM on muscle nAChR and Ki=4.84 nM on alpha-7). Also shows moderate inhibition on GABA(A) alpha-1-beta-3-gamma-2 receptor (GABRA1-GABRB3-GABRG2) (IC(50)=0.68 uM), and a lower inhibition on alpha-1-beta-2-gamma-2 (GABRA1-GABRB2-GABRG2) and alpha-3-beta-2-gamma-2 (GABRA3-GABRB2-GABRG2). The polypeptide is Long neurotoxin Tx-NM3-1 (Naja melanoleuca (Forest cobra)).